A 134-amino-acid polypeptide reads, in one-letter code: Ribosome-binding factor A (134 aa).

This sequence belongs to the RbfA family. Monomer. Binds 30S ribosomal subunits, but not 50S ribosomal subunits or 70S ribosomes.

The protein localises to the cytoplasm. In terms of biological role, one of several proteins that assist in the late maturation steps of the functional core of the 30S ribosomal subunit. Associates with free 30S ribosomal subunits (but not with 30S subunits that are part of 70S ribosomes or polysomes). Required for efficient processing of 16S rRNA. May interact with the 5'-terminal helix region of 16S rRNA. The polypeptide is Ribosome-binding factor A (Psychrobacter arcticus (strain DSM 17307 / VKM B-2377 / 273-4)).